We begin with the raw amino-acid sequence, 455 residues long: 3-isopropylmalate dehydratase large subunit (455 aa).

3 residues coordinate [4Fe-4S] cluster: Cys-336, Cys-396, and Cys-399.

Belongs to the aconitase/IPM isomerase family. LeuC type 1 subfamily. Heterodimer of LeuC and LeuD. Requires [4Fe-4S] cluster as cofactor.

The enzyme catalyses (2R,3S)-3-isopropylmalate = (2S)-2-isopropylmalate. It participates in amino-acid biosynthesis; L-leucine biosynthesis; L-leucine from 3-methyl-2-oxobutanoate: step 2/4. Catalyzes the isomerization between 2-isopropylmalate and 3-isopropylmalate, via the formation of 2-isopropylmaleate. In Staphylococcus aureus (strain MRSA252), this protein is 3-isopropylmalate dehydratase large subunit.